Here is a 347-residue protein sequence, read N- to C-terminus: S-adenosylmethionine:tRNA ribosyltransferase-isomerase (347 aa).

Belongs to the QueA family. Monomer.

It localises to the cytoplasm. It carries out the reaction 7-aminomethyl-7-carbaguanosine(34) in tRNA + S-adenosyl-L-methionine = epoxyqueuosine(34) in tRNA + adenine + L-methionine + 2 H(+). It functions in the pathway tRNA modification; tRNA-queuosine biosynthesis. Its function is as follows. Transfers and isomerizes the ribose moiety from AdoMet to the 7-aminomethyl group of 7-deazaguanine (preQ1-tRNA) to give epoxyqueuosine (oQ-tRNA). The protein is S-adenosylmethionine:tRNA ribosyltransferase-isomerase of Xylella fastidiosa (strain M23).